Reading from the N-terminus, the 320-residue chain is Cytochrome f (320 aa).

An N-terminal signal peptide occupies residues 1–35 (MQNRNTFSWVKEQMTRFISVSIMIYVITRTSIANA). Heme is bound by residues Tyr36, Cys56, Cys59, and His60. A helical transmembrane segment spans residues 286 to 306 (VQGLLFFLASVILAQIFLVLK).

Belongs to the cytochrome f family. As to quaternary structure, the 4 large subunits of the cytochrome b6-f complex are cytochrome b6, subunit IV (17 kDa polypeptide, petD), cytochrome f and the Rieske protein, while the 4 small subunits are PetG, PetL, PetM and PetN. The complex functions as a dimer. The cofactor is heme.

The protein resides in the plastid. The protein localises to the chloroplast thylakoid membrane. Its function is as follows. Component of the cytochrome b6-f complex, which mediates electron transfer between photosystem II (PSII) and photosystem I (PSI), cyclic electron flow around PSI, and state transitions. The chain is Cytochrome f from Acorus calamus (Sweet flag).